The primary structure comprises 389 residues: MQQHLSKTAYVYSDKLLQYRFHDQHPFNQMRLKLTTELLLNANLLSPEQIVQPRIATDDELMLIHKYDYVEAIKHASHGIISEDEAMKYGLNDEENGQFKHMHRHSATIVGGALTLADLIMSGKALNGCHLGGGLHHAQPGRASGFCIYNDIAITAQYLAKEYNQRVLIIDTDAHHGDGTQWSFYADNHVTTYSIHETGKFLFPGSGHYTERGEDIGYGHTVNVPLEPYTEDSSFLECFKLTVEPVVKSFKPDIILSVNGVDIHYRDPLTHLNCTLHSLYEIPYFVKYLADTYTNGKIIMFGGGGYNIWRVVPRAWSHVFLSLIDQPIQSGYLPLEWINKWKHYSSELLPKRWEDRLNDYTYVPRTKEISEKNKKLALHIASWYESTRQ.

The protein belongs to the histone deacetylase family.

It participates in ketone degradation; acetoin degradation. Its function is as follows. Role in growth on acetoin or butanediol. Involved in the breakdown of these compounds used as a carbon source. The protein is Acetoin utilization protein AcuC (acuC) of Staphylococcus aureus (strain MRSA252).